The sequence spans 628 residues: Kelch-like protein diablo (628 aa).

Positions 1–56 (MGDLPGSTGGGSGPAAAGNASGNSSSAGNTGLGVAGTTGVDRPPSPARLSHTSEKH) are disordered. Over residues 14–29 (PAAAGNASGNSSSAGN) the composition is skewed to low complexity. Residues 74–141 (CDVVLNVGGR…CYTAHIIVEE (68 aa)) enclose the BTB domain. The BACK domain maps to 176–278 (CLGIRAFADT…SPKFLVGTVG (103 aa)). Kelch repeat units lie at residues 325–371 (VLFA…VLND), 373–419 (LYAV…VLDG), 420–466 (FLYA…VLGG), 468–513 (LYAI…VFNN), 515–560 (IYAV…VVNG), and 561–607 (QLYA…VMRA).

The protein operates within protein modification; protein ubiquitination. Functionally, probable substrate-specific adapter of an E3 ubiquitin-protein ligase complex which mediates the ubiquitination and subsequent proteasomal degradation of target proteins. May have a role in synapse differentiation and growth. The polypeptide is Kelch-like protein diablo (Drosophila persimilis (Fruit fly)).